The following is a 1082-amino-acid chain: M cell-type agglutination protein mam3 (1082 aa).

The N-terminal stretch at 1–18 is a signal peptide; the sequence is MSIALAFFILVLLGFSWA. Residues Asn28, Asn56, and Asn82 are each glycosylated (N-linked (GlcNAc...) asparagine). Residues 353-374 are disordered; it reads TSSSSTDQLTSASPISSSVISP. N-linked (GlcNAc...) asparagine glycosylation is found at Asn451, Asn475, Asn495, Asn520, Asn548, Asn588, Asn613, and Asn638. 11 repeat units span residues 646–681, 682–717, 718–753, 754–789, 790–825, 826–861, 862–897, 898–933, 934–969, 970–1005, and 1006–1041. Residues 720-1043 form an 11 X 36 AA approximate tandem repeats region; sequence VTETVTSGSI…VLVDIPQQHA (324 aa).

Belongs to the mam3/map4 family.

The protein resides in the cell surface. Functionally, m cell-type specific protein involved in agglutination during conjugation. This is M cell-type agglutination protein mam3 from Schizosaccharomyces pombe (strain 972 / ATCC 24843) (Fission yeast).